We begin with the raw amino-acid sequence, 370 residues long: MKERQRWRPEEDAVLRAYVRQYGPREWHLVSQRMNVALDRDAKSCLERWKNYLRPGIKKGSLTEEEQRLVIRLQAKHGNKWKKIAAEVPGRTAKRLGKWWEVFKEKQQRELRDSRRPPPEPSPDERGRYEWLLENFAEKLVGERPQQAAAAPSPLLMAAPVLPPWLSSNAGPAAAAAAAVAHPPPRPPSPSVTLSLASAAVAPGPPAPAPWMPDRAAADAAPYGFPSPSQHGGAAPPGMAVVDGQALAELAECCRELEEGRRAWAAHRREAAWRLKRVEQQLEMEREMRRREVWEEFEAKMRTMRLEQAAAAERVERDHREKVAELRRDAQVKEEKMAEQWAAKHARVAKFVEQMGGCSRSWSSATDMNC.

HTH myb-type domains are found at residues 1–53 (MKER…KNYL) and 54–108 (RPGI…EKQQ). 2 consecutive DNA-binding regions (H-T-H motif) follow at residues 27–53 (WHLV…KNYL) and 81–104 (WKKI…EVFK). The interval 107-129 (QQRELRDSRRPPPEPSPDERGRY) is disordered. Residues 276 to 340 (KRVEQQLEME…QVKEEKMAEQ (65 aa)) are a coiled coil.

In terms of assembly, homodimer. Interacts with AS2, WRKY1, HIRA, a probable histone chaperone, and RIK, a predicted RNA binding protein. As to expression, expressed in lateral organ promordia.

Its subcellular location is the nucleus. Its function is as follows. Transcription factor required for normal cell differentiation. Interacts directly with asymmetric leaves 2 (AS2) to repress the knox homeobox genes. This is Protein rough sheath 2 (RS2) from Zea mays (Maize).